The following is an 85-amino-acid chain: WAP four-disulfide core domain protein 12 (85 aa).

An N-terminal signal peptide occupies residues 1–21 (MWPNSILVLMTLLISSTLVTG). Positions 25 to 72 (KGEEKRVCPPDYVRCIRQDDPQCYSDNDCGDQEICCFWQCGFKCVLPV) constitute a WAP domain. Cystine bridges form between Cys-32/Cys-60, Cys-39/Cys-64, Cys-47/Cys-59, and Cys-53/Cys-68.

Constitutively expressed in tongue.

It is found in the secreted. Its function is as follows. Antibacterial protein which inhibits the growth of E.coli and S.aureus. Putative acid-stable proteinase inhibitor. This Mus musculus (Mouse) protein is WAP four-disulfide core domain protein 12.